The chain runs to 397 residues: Acetate kinase 2 (397 aa).

N10 is a binding site for Mg(2+). K17 serves as a coordination point for ATP. R90 contributes to the substrate binding site. The active-site Proton donor/acceptor is the D147. Residues 207–211, 281–283, and 329–333 each bind ATP; these read HLGNG, DAR, and GIGEN. E385 is a Mg(2+) binding site.

This sequence belongs to the acetokinase family. As to quaternary structure, homodimer. It depends on Mg(2+) as a cofactor. Mn(2+) is required as a cofactor.

It is found in the cytoplasm. It carries out the reaction acetate + ATP = acetyl phosphate + ADP. Its pathway is metabolic intermediate biosynthesis; acetyl-CoA biosynthesis; acetyl-CoA from acetate: step 1/2. In terms of biological role, catalyzes the formation of acetyl phosphate from acetate and ATP. Can also catalyze the reverse reaction. The polypeptide is Acetate kinase 2 (Vibrio vulnificus (strain CMCP6)).